We begin with the raw amino-acid sequence, 418 residues long: Phosphoglycerate kinase (418 aa).

Substrate is bound by residues Asp18 to Asn20, Arg34, His57 to Arg60, Arg115, and Arg171. ATP is bound by residues Lys224, Gly315, Glu346, and Gly375–Ser378.

Belongs to the phosphoglycerate kinase family. As to quaternary structure, monomer.

The protein localises to the cytoplasm. It carries out the reaction (2R)-3-phosphoglycerate + ATP = (2R)-3-phospho-glyceroyl phosphate + ADP. It participates in carbohydrate degradation; glycolysis; pyruvate from D-glyceraldehyde 3-phosphate: step 2/5. The sequence is that of Phosphoglycerate kinase from Porphyromonas gingivalis (strain ATCC BAA-308 / W83).